The following is a 101-amino-acid chain: Large ribosomal subunit protein bL27 (101 aa).

Residues 1–9 (MLLMNLQLF) constitute a propeptide that is removed on maturation.

Belongs to the bacterial ribosomal protein bL27 family. The N-terminus is cleaved by ribosomal processing cysteine protease Prp.

This is Large ribosomal subunit protein bL27 from Clostridium tetani (strain Massachusetts / E88).